Here is a 121-residue protein sequence, read N- to C-terminus: MARIAGVNIPNHQHTEIGLTAIFGIGRTRSRSICSAAGVEFSKKVKDLTDADLEKLREEVGKFIVEGDLRREVTMNIKRLMDLGCYRGVRHRKGLPMRGQRTRTNARTRKGPRRAAQALKK.

A disordered region spans residues 93–121; sequence KGLPMRGQRTRTNARTRKGPRRAAQALKK.

Belongs to the universal ribosomal protein uS13 family. As to quaternary structure, part of the 30S ribosomal subunit. Forms a loose heterodimer with protein S19. Forms two bridges to the 50S subunit in the 70S ribosome.

Functionally, located at the top of the head of the 30S subunit, it contacts several helices of the 16S rRNA. In the 70S ribosome it contacts the 23S rRNA (bridge B1a) and protein L5 of the 50S subunit (bridge B1b), connecting the 2 subunits; these bridges are implicated in subunit movement. Contacts the tRNAs in the A and P-sites. This is Small ribosomal subunit protein uS13 from Burkholderia ambifaria (strain ATCC BAA-244 / DSM 16087 / CCUG 44356 / LMG 19182 / AMMD) (Burkholderia cepacia (strain AMMD)).